The following is a 648-amino-acid chain: Fidgetin-like protein 2 (648 aa).

The interval 1–36 (MHWTPEHAQPLNQWPEQHLDVSSTTPSPAHKLELPP) is disordered. Residues 10–27 (PLNQWPEQHLDVSSTTPS) show a composition bias toward polar residues. ATP-binding positions include A394 and 434–439 (GCGKAL).

This sequence belongs to the AAA ATPase family. Requires Mg(2+) as cofactor.

The protein localises to the cytoplasm. Its subcellular location is the cell cortex. It carries out the reaction ATP + H2O = ADP + phosphate + H(+). Microtubule-severing enzyme that negatively regulates cell migration and wound healing. In migrating cells, targets dynamic microtubules (MTs) at the leading edge and severs them, thereby suppressing motility. Microtubule severing releases ARHGEF2 which activates RHOA, which in turn regulates focal ahesion turnover via focal adhesion kinase, as opposed to F-actin polymerization, to suppress cell motility. Negative regulator of axon regeneration that suppresses axonal growth by selectively severing dynamic MTs in the distal axon shaft and growth cone. Contributes to proper cell branching during endothelial and neuronal development. This is Fidgetin-like protein 2 (Fignl2) from Rattus norvegicus (Rat).